A 295-amino-acid chain; its full sequence is 4-hydroxy-tetrahydrodipicolinate synthase (295 aa).

Thr47 contributes to the pyruvate binding site. Tyr135 acts as the Proton donor/acceptor in catalysis. The Schiff-base intermediate with substrate role is filled by Lys163. Ile206 contributes to the pyruvate binding site.

As to quaternary structure, homodimer. In fact, exists in a monomer-dimer equilibrium in solution, shifted in favor of the dimer in presence of the substrate pyruvate; the monomer has significantly reduced activity compared with the dimer.

The protein localises to the cytoplasm. It carries out the reaction L-aspartate 4-semialdehyde + pyruvate = (2S,4S)-4-hydroxy-2,3,4,5-tetrahydrodipicolinate + H2O + H(+). The protein operates within amino-acid biosynthesis; L-lysine biosynthesis via DAP pathway; (S)-tetrahydrodipicolinate from L-aspartate: step 3/4. With respect to regulation, is insensitive to lysine-feedback inhibition. Shows ASA substrate inhibition. Functionally, catalyzes the condensation of (S)-aspartate-beta-semialdehyde [(S)-ASA] and pyruvate to 4-hydroxy-tetrahydrodipicolinate (HTPA). This chain is 4-hydroxy-tetrahydrodipicolinate synthase, found in Staphylococcus aureus (strain MRSA252).